We begin with the raw amino-acid sequence, 198 residues long: Chitin synthase 2 (198 aa).

This sequence belongs to the chitin synthase family. Class III subfamily.

It localises to the cell membrane. The catalysed reaction is [(1-&gt;4)-N-acetyl-beta-D-glucosaminyl](n) + UDP-N-acetyl-alpha-D-glucosamine = [(1-&gt;4)-N-acetyl-beta-D-glucosaminyl](n+1) + UDP + H(+). Polymerizes chitin, a structural polymer of the cell wall and septum, by transferring the sugar moiety of UDP-GlcNAc to the non-reducing end of the growing chitin polymer. This chain is Chitin synthase 2 (CHS2), found in Rhinocladiella atrovirens.